Here is a 122-residue protein sequence, read N- to C-terminus: Fluoride-specific ion channel FluC 2 (122 aa).

Helical transmembrane passes span 1-21, 33-53, 62-82, and 102-122; these read MAWLYVGCGGIAGTLARFLLS, PLGTLFVNLSGAFLLGLLLAL, VTLALGTGFVGAYTTFSTFTY, and GSILGGLLLAWLGWLAAGSLF. Residues Gly-72 and Thr-75 each contribute to the Na(+) site.

The protein belongs to the fluoride channel Fluc/FEX (TC 1.A.43) family.

The protein localises to the cell membrane. It carries out the reaction fluoride(in) = fluoride(out). Its activity is regulated as follows. Na(+) is not transported, but it plays an essential structural role and its presence is essential for fluoride channel function. Functionally, fluoride-specific ion channel. Important for reducing fluoride concentration in the cell, thus reducing its toxicity. The polypeptide is Fluoride-specific ion channel FluC 2 (Moorella thermoacetica (strain ATCC 39073 / JCM 9320)).